A 176-amino-acid polypeptide reads, in one-letter code: ATP synthase subunit d, mitochondrial (176 aa).

As to quaternary structure, F-type ATP synthases have 2 components, the catalytic core F(1) and the membrane-embedded component F(0), linked together by a central stalk and a peripheral stalk. The central stalk, also called rotor shaft, is often seen as part of F(1). The peripheral stalk is seen as part of F(0). F(0) contains the membrane channel next to the rotor. F-type ATP synthases form dimers but each monomer functions independently in ATP generation. The dimer consists of 17 different polypeptides: ATP1 (subunit alpha, 3 molecules per monomer, part of F(1)), ATP2 (subunit beta, 3 copies per monomer, part of F(1)), ATP3 (subunit gamma, part of the central stalk), ATP4 (subunit b, part of the peripheral stalk), ATP5/OSCP (subunit 5/OSCP, part of the peripheral stalk), ATP6 (subunit a, part of the peripheral stalk), ATP7 (subunit d, part of the peripheral stalk), ATP8 (subunit 8, part of the peripheral stalk), OLI1 (subunit c, part of the rotor, 10 molecules per monomer), ATP14 (subunit h, part of the peripheral stalk), ATP15 (subunit epsilon, part of the central stalk), ATP16 (subunit delta, part of the central stalk), ATP17 (subunit f, part of the peripheral stalk), ATP18 (subunit i/j, part of the peripheral stalk), ATP19 (subunit k, dimer-specific, at interface between monomers), ATP20 (subunit g, at interface between monomers), TIM11 (subunit e, at interface between monomers).

It is found in the mitochondrion inner membrane. Its function is as follows. Mitochondrial membrane ATP synthase (F(1)F(0) ATP synthase or Complex V) produces ATP from ADP in the presence of a proton gradient across the membrane which is generated by electron transport complexes of the respiratory chain. F-type ATP synthases consist of two structural domains, F(1) - containing the extramembraneous catalytic core, and F(0) - containing the membrane proton channel, linked together by a central stalk and a peripheral stalk. During catalysis, ATP synthesis in the catalytic domain of F(1) is coupled via a rotary mechanism of the central stalk subunits to proton translocation. Part of the complex F(0) domain and the peripheral stalk, which acts as a stator to hold the catalytic alpha/ATP1(3)beta/ATP2(3) subcomplex and subunit a/ATP6 static relative to the rotary elements. The sequence is that of ATP synthase subunit d, mitochondrial from Yarrowia lipolytica (strain CLIB 122 / E 150) (Yeast).